The sequence spans 69 residues: U-Asilidin(12)-Dg3b (69 aa).

An N-terminal signal peptide occupies residues 1–19; the sequence is MRFLNIFLFFAVMIAFVSA. Positions 20–33 are excised as a propeptide; it reads SPVLEEEEIDIEPR. Intrachain disulfides connect C36–C59, C45–C65, and C49–C67.

The protein belongs to the asilidin-12 family. Expressed by the venom gland.

Its subcellular location is the secreted. Its function is as follows. The recombinant peptide moderately increases Kv11.1/KCNH2/ERG1 currents and shifts the voltage-dependence of the channel activation to hyperpolarised potentials. In vivo, induces neurotoxic effects when injected into insects (tested on L.cuprina and A.domesticus). The polypeptide is U-Asilidin(12)-Dg3b (Dolopus genitalis (Giant Australian assassin fly)).